The following is a 183-amino-acid chain: ATP synthase subunit delta (183 aa).

This sequence belongs to the ATPase delta chain family. As to quaternary structure, F-type ATPases have 2 components, F(1) - the catalytic core - and F(0) - the membrane proton channel. F(1) has five subunits: alpha(3), beta(3), gamma(1), delta(1), epsilon(1). F(0) has three main subunits: a(1), b(2) and c(10-14). The alpha and beta chains form an alternating ring which encloses part of the gamma chain. F(1) is attached to F(0) by a central stalk formed by the gamma and epsilon chains, while a peripheral stalk is formed by the delta and b chains.

It is found in the cell inner membrane. In terms of biological role, f(1)F(0) ATP synthase produces ATP from ADP in the presence of a proton or sodium gradient. F-type ATPases consist of two structural domains, F(1) containing the extramembraneous catalytic core and F(0) containing the membrane proton channel, linked together by a central stalk and a peripheral stalk. During catalysis, ATP synthesis in the catalytic domain of F(1) is coupled via a rotary mechanism of the central stalk subunits to proton translocation. Its function is as follows. This protein is part of the stalk that links CF(0) to CF(1). It either transmits conformational changes from CF(0) to CF(1) or is implicated in proton conduction. In Syntrophobacter fumaroxidans (strain DSM 10017 / MPOB), this protein is ATP synthase subunit delta.